The primary structure comprises 122 residues: uncharacterized protein (122 aa).

This sequence to B.subtilis YpdA.

This is an uncharacterized protein from Bacillus licheniformis.